An 811-amino-acid chain; its full sequence is MAGSGSWDGSQSDNSSQFEPGIDNIYEAFICPLTKQVMHNPVTLENGQTFEREAIEKWFQECRENGQPLSCPITSKELSITDLSPSIALRNTIEEWRARNDALKLDIARQSLYLGNAETNILLALKNVREICRNIRKIRQRVCNPQLVRLITDMLKSSSHEVRCKALQTLQVVVEGDEESKAIVAEGDTVRTIVKFLSQEPSKGREAAVSVLFELSKSEALCEKIGSIHGAIILLVGLTSSKSENVSTVEKADKTLTNLERSEENVRQMAINGRLQPLLAKLLEGSPETKVSMAFYLGVLALNNDVKVIVAQTVGSSLIDLMRTRDMSQREAALGALNNISSFEGSAKLLINTGILPPLIKDLFYVGPNQLPIRLKEVSATILANIVNIGYDFDKVPVGPHHQTLVSEEIVENLLQLTSNTGPEIQGKLLAVLVGLTSCPNSVINVVSAIRNSAAIISLVQFVEIHENDDLRLASIKLLHNISPHMSEELANALRSTVGQLGSLVSIISENTPTITEEQAAAAGLLAELPERDLVLTMRLLREGAFEKIISKIVGIRQGEIRGIRFERTFLEGLVSILARITFALTKETDATLFCCEKNLPSLFLDLLQSNSQDNIQRASATALENLSLESKNLTKIPELPPPTYCVSIFSCLSKPPVVLGICKIHQGICSVRESFCLVEGQAVDKLVDLLDHENDKVVGPALAALSTLLEDGLDVVQGVRLIDEADGITPILNVLLENRTENLRIRAVWMVERILRIEEIAREVGEEQNVTAALVDAFQNADFRTRQIAEKALRHIDKIPNFSGIFTNIG.

The 80-residue stretch at 24–103 (NIYEAFICPL…EEWRARNDAL (80 aa)) folds into the U-box domain. 9 ARM repeats span residues 136–175 (RKIR…VVVE), 178–217 (EESK…ELSK), 220–261 (ALCE…NLER), 263–302 (EENV…VLAL), 303–342 (NNDV…NISS), 344–388 (EGSA…NIVN), 399–438 (GPHH…GLTS), 444–484 (INVV…NISP), and 489–528 (ELAN…LLAE).

The catalysed reaction is S-ubiquitinyl-[E2 ubiquitin-conjugating enzyme]-L-cysteine + [acceptor protein]-L-lysine = [E2 ubiquitin-conjugating enzyme]-L-cysteine + N(6)-ubiquitinyl-[acceptor protein]-L-lysine.. Its pathway is protein modification; protein ubiquitination. Functionally, functions as an E3 ubiquitin ligase. The polypeptide is U-box domain-containing protein 43 (PUB43) (Arabidopsis thaliana (Mouse-ear cress)).